Consider the following 160-residue polypeptide: Transcription elongation factor GreA (160 aa).

Residues 1 to 71 (MAEKTYPMTL…GQISTLETKI (71 aa)) adopt a coiled-coil conformation.

The protein belongs to the GreA/GreB family.

In terms of biological role, necessary for efficient RNA polymerase transcription elongation past template-encoded arresting sites. The arresting sites in DNA have the property of trapping a certain fraction of elongating RNA polymerases that pass through, resulting in locked ternary complexes. Cleavage of the nascent transcript by cleavage factors such as GreA or GreB allows the resumption of elongation from the new 3'terminus. GreA releases sequences of 2 to 3 nucleotides. In Streptococcus pyogenes serotype M3 (strain ATCC BAA-595 / MGAS315), this protein is Transcription elongation factor GreA.